The chain runs to 428 residues: tRNA(Ile)-lysidine synthase (428 aa).

Position 25-30 (25-30 (SGGIDS)) interacts with ATP.

Belongs to the tRNA(Ile)-lysidine synthase family.

The protein localises to the cytoplasm. It carries out the reaction cytidine(34) in tRNA(Ile2) + L-lysine + ATP = lysidine(34) in tRNA(Ile2) + AMP + diphosphate + H(+). Ligates lysine onto the cytidine present at position 34 of the AUA codon-specific tRNA(Ile) that contains the anticodon CAU, in an ATP-dependent manner. Cytidine is converted to lysidine, thus changing the amino acid specificity of the tRNA from methionine to isoleucine. The polypeptide is tRNA(Ile)-lysidine synthase (Haemophilus ducreyi (strain 35000HP / ATCC 700724)).